Here is a 368-residue protein sequence, read N- to C-terminus: Carbamoyl phosphate synthase small chain (368 aa).

The CPSase stretch occupies residues 1–178 (MKAVLGLEDG…GAECAWKGSG (178 aa)). L-glutamine-binding residues include Ser45, Gly230, and Gly232. A Glutamine amidotransferase type-1 domain is found at 182 to 368 (HAVVVDLGIK…KVVKVLGGDL (187 aa)). Cys257 functions as the Nucleophile in the catalytic mechanism. 5 residues coordinate L-glutamine: Phe258, Gln261, Asn299, Gly301, and Tyr302. Active-site residues include His342 and Glu344.

This sequence belongs to the CarA family. As to quaternary structure, composed of two chains; the small (or glutamine) chain promotes the hydrolysis of glutamine to ammonia, which is used by the large (or ammonia) chain to synthesize carbamoyl phosphate. Tetramer of heterodimers (alpha,beta)4.

The enzyme catalyses hydrogencarbonate + L-glutamine + 2 ATP + H2O = carbamoyl phosphate + L-glutamate + 2 ADP + phosphate + 2 H(+). It carries out the reaction L-glutamine + H2O = L-glutamate + NH4(+). It functions in the pathway amino-acid biosynthesis; L-arginine biosynthesis; carbamoyl phosphate from bicarbonate: step 1/1. Its pathway is pyrimidine metabolism; UMP biosynthesis via de novo pathway; (S)-dihydroorotate from bicarbonate: step 1/3. In terms of biological role, small subunit of the glutamine-dependent carbamoyl phosphate synthetase (CPSase). CPSase catalyzes the formation of carbamoyl phosphate from the ammonia moiety of glutamine, carbonate, and phosphate donated by ATP, constituting the first step of 2 biosynthetic pathways, one leading to arginine and/or urea and the other to pyrimidine nucleotides. The small subunit (glutamine amidotransferase) binds and cleaves glutamine to supply the large subunit with the substrate ammonia. This chain is Carbamoyl phosphate synthase small chain, found in Methanosarcina acetivorans (strain ATCC 35395 / DSM 2834 / JCM 12185 / C2A).